The sequence spans 352 residues: tRNA uridine(34) hydroxylase (352 aa).

One can recognise a Rhodanese domain in the interval 146–240; that stretch reads DNPDTLFVDM…YARKAREQGL (95 aa). The Cysteine persulfide intermediate role is filled by Cys200. Over residues 315-328 the composition is skewed to basic and acidic residues; it reads ETEQRARRAGRENG. Positions 315-352 are disordered; sequence ETEQRARRAGRENGAKIFNKSRHRLQDGLNSTSLQSVE. The segment covering 342–352 has biased composition (polar residues); it reads GLNSTSLQSVE.

The protein belongs to the TrhO family.

It catalyses the reaction uridine(34) in tRNA + AH2 + O2 = 5-hydroxyuridine(34) in tRNA + A + H2O. Catalyzes oxygen-dependent 5-hydroxyuridine (ho5U) modification at position 34 in tRNAs. This chain is tRNA uridine(34) hydroxylase, found in Photorhabdus laumondii subsp. laumondii (strain DSM 15139 / CIP 105565 / TT01) (Photorhabdus luminescens subsp. laumondii).